We begin with the raw amino-acid sequence, 362 residues long: Innexin inx1 (362 aa).

At 1–28 the chain is on the cytoplasmic side; sequence MYKLLGSLKSYLKWQDIQTDNAVFRLHN. Residues 29-49 form a helical membrane-spanning segment; the sequence is SFTTVLLLTCSLIITATQYVG. Residues 50-110 lie on the Extracellular side of the membrane; sequence QPISCIVNGV…DAKKYYTYYQ (61 aa). A helical transmembrane segment spans residues 111–131; that stretch reads WVCFVLFFQAMACYTPKFLWN. Over 132-177 the chain is Cytoplasmic; that stretch reads KFEGGLMRMIVMGLNITICTREEKEAKRDALLDYLIKHVKRHKLYA. The helical transmembrane segment at 178–198 threads the bilayer; that stretch reads IRYWACEFLCCINIIVQMYLM. The Extracellular portion of the chain corresponds to 199 to 267; it reads NRFFDGEFLS…LPLNIVNEKT (69 aa). The helical transmembrane segment at 268 to 288 threads the bilayer; that stretch reads YVFIWFWFWILLVLLIGLIVF. Residues 289–362 are Cytoplasmic-facing; sequence RGCIIFMPKF…VEPSKHDRAK (74 aa).

This sequence belongs to the pannexin family. As to quaternary structure, heterooligomer of Inx2 and ogre. In ovary, expressed in follicle cells. Expressed around the periphery of the embryo during cellular blastoderm formation. Repeating epidermal pattern emerges from stage 11, high levels of expression detected along the borders of each segment from stage 13. At stage 13, expressed in the dorsal branch of the tracheal system. During stage 15, detected in a few cells at each of the branch points of the dorsal trunk and at low levels in cardioblasts. In embryos, also expressed in the salivary gland and the hindgut (at protein level). At stage 17, expressed in the dorsal side of the CNS. Expressed in the imaginal wing disk. Expressed in larval CNS and in tissues outside of the CNS. In pupae, expressed in the CNS and in primary, secondary and tertiary pigment cells of the retina.

It localises to the cell membrane. Its subcellular location is the cell junction. The protein resides in the gap junction. It is found in the basolateral cell membrane. In terms of biological role, structural component of the gap junctions. Essential for generation and/or maintenance of postembryonic neuroblasts and normal development of optic lobe. In Drosophila melanogaster (Fruit fly), this protein is Innexin inx1 (ogre).